Here is a 1374-residue protein sequence, read N- to C-terminus: DNA-directed RNA polymerase subunit beta (1374 aa).

It belongs to the RNA polymerase beta chain family. In terms of assembly, the RNAP catalytic core consists of 2 alpha, 1 beta, 1 beta' and 1 omega subunit. When a sigma factor is associated with the core the holoenzyme is formed, which can initiate transcription.

It catalyses the reaction RNA(n) + a ribonucleoside 5'-triphosphate = RNA(n+1) + diphosphate. In terms of biological role, DNA-dependent RNA polymerase catalyzes the transcription of DNA into RNA using the four ribonucleoside triphosphates as substrates. This Rickettsia prowazekii (strain Madrid E) protein is DNA-directed RNA polymerase subunit beta.